We begin with the raw amino-acid sequence, 366 residues long: UDP-N-acetylglucosamine--N-acetylmuramyl-(pentapeptide) pyrophosphoryl-undecaprenol N-acetylglucosamine transferase (366 aa).

Residues 14–16 (TGG), asparagine 125, arginine 168, serine 196, and glutamine 297 each bind UDP-N-acetyl-alpha-D-glucosamine.

The protein belongs to the glycosyltransferase 28 family. MurG subfamily.

The protein resides in the cell inner membrane. It carries out the reaction di-trans,octa-cis-undecaprenyl diphospho-N-acetyl-alpha-D-muramoyl-L-alanyl-D-glutamyl-meso-2,6-diaminopimeloyl-D-alanyl-D-alanine + UDP-N-acetyl-alpha-D-glucosamine = di-trans,octa-cis-undecaprenyl diphospho-[N-acetyl-alpha-D-glucosaminyl-(1-&gt;4)]-N-acetyl-alpha-D-muramoyl-L-alanyl-D-glutamyl-meso-2,6-diaminopimeloyl-D-alanyl-D-alanine + UDP + H(+). It functions in the pathway cell wall biogenesis; peptidoglycan biosynthesis. Functionally, cell wall formation. Catalyzes the transfer of a GlcNAc subunit on undecaprenyl-pyrophosphoryl-MurNAc-pentapeptide (lipid intermediate I) to form undecaprenyl-pyrophosphoryl-MurNAc-(pentapeptide)GlcNAc (lipid intermediate II). The protein is UDP-N-acetylglucosamine--N-acetylmuramyl-(pentapeptide) pyrophosphoryl-undecaprenol N-acetylglucosamine transferase of Rhodopseudomonas palustris (strain BisB5).